The sequence spans 182 residues: Vacuolar protein sorting-associated protein 29 (182 aa).

An N6-acetyllysine modification is found at Lys-50.

This sequence belongs to the VPS29 family. Component of the commander complex consisting of the CCC subcomplex and the retriever subcomplex. Component of the heterotrimeric retriever complex formed by VPS26C, VPS29 and VPS35L; within the complex interacts with VPS35L. Component of the heterotrimeric retromer cargo-selective complex (CSC), also described as vacuolar protein sorting subcomplex (VPS) formed by VPS26 (VPS26A or VPS26B), VPS29 and VPS35. The CSC has a highly elongated structure with VPS26 and VPS29 binding independently at opposite distal ends of VPS35 as central platform. The CSC is believed to associate with variable sorting nexins to form functionally distinct retromer complex variants. The originally described retromer complex (also called SNX-BAR retromer) is a pentamer containing the CSC and a heterodimeric membrane-deforming subcomplex formed between SNX1 or SNX2 and SNX5 or SNX6 (also called SNX-BAR subcomplex); the respective CSC and SNX-BAR subcomplexes associate with low affinity. The CSC associates with SNX3 to form a SNX3-retromer complex. The CSC associates with SNX27, the WASH complex and the SNX-BAR subcomplex to form the SNX27-retromer complex. Interacts with VPS26A, VPS35, SNX1, SNX2, SNX3, SNX27, WASHC5. Interacts with TBC1D5; this interaction is blocked by VPS35L in the retriever complex. Interacts with SNX17; the interaction is indirect; SNX17 (via its C-terminus) interacts with the retriever complex (via VPS26C and VPS35L). Interacts with VPS26B and ANKRD27.

Its subcellular location is the cytoplasm. It is found in the membrane. The protein localises to the endosome membrane. Its function is as follows. Component of the commander complex that is essential for endosomal recycling of transmembrane cargos; the commander complex is composed of the CCC subcomplex and the retriever subcomplex. Component of the retriever complex, which is a heterotrimeric complex related to retromer cargo-selective complex (CSC) and essential for retromer-independent retrieval and recycling of numerous cargos such as integrin alpha-5/beta-1 (ITGA5:ITGB1). Component of the retromer cargo-selective complex (CSC). The CSC is believed to be the core functional component of retromer or respective retromer complex variants acting to prevent missorting of selected transmembrane cargo proteins into the lysosomal degradation pathway. The recruitment of the CSC to the endosomal membrane involves RAB7A and SNX3. The SNX-BAR retromer mediates retrograde transport of cargo proteins from endosomes to the trans-Golgi network (TGN) and is involved in endosome-to-plasma membrane transport for cargo protein recycling. The SNX3-retromer mediates the retrograde endosome-to-TGN transport of WLS distinct from the SNX-BAR retromer pathway. The SNX27-retromer is believed to be involved in endosome-to-plasma membrane trafficking and recycling of a broad spectrum of cargo proteins. The CSC seems to act as recruitment hub for other proteins, such as the WASH complex and TBC1D5. Required to regulate transcytosis of the polymeric immunoglobulin receptor (pIgR-pIgA). In the endosomes, retriever complex drives the retrieval and recycling of NxxY-motif-containing cargo proteins by coupling to SNX17, a cargo essential for the homeostatic maintenance of numerous cell surface proteins associated with processes that include cell migration, cell adhesion, nutrient supply and cell signaling. The recruitment of the retriever complex to the endosomal membrane involves CCC and WASH complexes. Involved in GLUT1 endosome-to-plasma membrane trafficking; the function is dependent of association with ANKRD27. In Mus musculus (Mouse), this protein is Vacuolar protein sorting-associated protein 29 (Vps29).